The primary structure comprises 100 residues: Small ribosomal subunit protein uS14c (100 aa).

This sequence belongs to the universal ribosomal protein uS14 family. As to quaternary structure, part of the 30S ribosomal subunit.

The protein resides in the plastid. It is found in the chloroplast. Binds 16S rRNA, required for the assembly of 30S particles. This is Small ribosomal subunit protein uS14c from Guillardia theta (Cryptophyte).